The chain runs to 492 residues: MAVLLETTLGDVVIDLYTEERPRACLNFLKLCKIKYYNYCLIHNVQRDFIIQTGDPTGTGRGGESIFGQLYGDQASFFEAEKVPRIKHKKKGTVSMVNNGSDQHGSQFLITTGENLDYLDGVHTVFGEVTEGMDIIKKINETFVDKDFVPYQDIRINHTVILDDPFDDPPDLLIPDRSPEPTREQLDSGRIGADEEIDDFKGRSAEEVEEIKAEKEAKTQAILLEMVGDLPDADIKPPENVLFVCKLNPVTTDEDLEIIFSRFGPIRSCEVIRDWKTGESLCYAFIEFEKEEDCEKAFFKMDNVLIDDRRIHVDFSQSVAKVKWKGKGGKYTKSDFKEYEKEQDKPPNLVLKDKVKPKQDTKYDLILDEQAEDSKSSHSHTSKKHKKKTHHCSEEKEDEDYMPIKNTNQDIYREMGFGHYEEEESCWEKQKSEKRDRTQNRSRSRSRERDGHYSNSHKSKYQTDLYERERSKKRDRSRSPKKSKDKEKSKYR.

The 161-residue stretch at 1–161 (MAVLLETTLG…QDIRINHTVI (161 aa)) folds into the PPIase cyclophilin-type domain. Positions 167 to 188 (DDPPDLLIPDRSPEPTREQLDS) are disordered. Basic and acidic residues predominate over residues 177 to 187 (RSPEPTREQLD). S178 bears the Phosphoserine mark. Position 182 is a phosphothreonine (T182). Residues K201, K212, and K218 each participate in a glycyl lysine isopeptide (Lys-Gly) (interchain with G-Cter in SUMO2) cross-link. The RRM domain maps to 240–318 (NVLFVCKLNP…RRIHVDFSQS (79 aa)). Glycyl lysine isopeptide (Lys-Gly) (interchain with G-Cter in SUMO2) cross-links involve residues K321 and K362. Disordered stretches follow at residues 368–406 (DEQA…PIKN) and 423–492 (EESC…SKYR). Residues 377-390 (SHSHTSKKHKKKTH) are compositionally biased toward basic residues. Residue S393 is modified to Phosphoserine. A Glycyl lysine isopeptide (Lys-Gly) (interchain with G-Cter in SUMO2) cross-link involves residue K405. A compositionally biased stretch (basic and acidic residues) spans 426 to 452 (CWEKQKSEKRDRTQNRSRSRSRERDGH). K460 participates in a covalent cross-link: Glycyl lysine isopeptide (Lys-Gly) (interchain with G-Cter in SUMO2). Residue S471 is modified to Phosphoserine. Residues 482 to 492 (KSKDKEKSKYR) are compositionally biased toward basic and acidic residues.

Belongs to the cyclophilin-type PPIase family. PPIL4 subfamily. In terms of tissue distribution, abundantly expressed in kidney but has a ubiquitously low expression pattern in other adult tissues.

It is found in the nucleus. The catalysed reaction is [protein]-peptidylproline (omega=180) = [protein]-peptidylproline (omega=0). Functionally, PPIases accelerate the folding of proteins. It catalyzes the cis-trans isomerization of proline imidic peptide bonds in oligopeptides. In Homo sapiens (Human), this protein is Peptidyl-prolyl cis-trans isomerase-like 4 (PPIL4).